A 1140-amino-acid polypeptide reads, in one-letter code: DNA damage-binding protein 1 (1140 aa).

An N-acetylserine modification is found at serine 2. Residues 2 to 768 are interaction with CDT1; sequence SYNYVVTAQK…QALSSSVSSS (767 aa). Positions 13 to 356 are WD repeat beta-propeller A; sequence TAVNGCVTGH…VVAMETFTNL (344 aa). Residues 391–708 form a WD repeat beta-propeller B; Interaction with CUL4A region; the sequence is RNGIGIHEHA…LTIGTMNEIQ (318 aa). Positions 709 to 1043 are WD repeat beta-propeller C; sequence KLHIRTVPIY…NGMIGLVTSL (335 aa). The segment at 771-1140 is interaction with CDT1 and CUL4A; sequence FSSSAAPHET…KVVEELTRIH (370 aa). Lysine 1067 is subject to N6-acetyllysine. Lysine 1121 participates in a covalent cross-link: Glycyl lysine isopeptide (Lys-Gly) (interchain with G-Cter in SUMO2). Threonine 1125 carries the phosphothreonine modification.

The protein belongs to the DDB1 family. In terms of assembly, component of the UV-DDB complex which includes DDB1 and DDB2; the heterodimer dimerizes to give rise to a heterotetramer when bound to damaged DNA. The UV-DDB complex interacts with monoubiquitinated histone H2A and binds to XPC via the DDB2 subunit. Component of numerous DCX (DDB1-CUL4-X-box) E3 ubiquitin-protein ligase complexes which consist of a core of DDB1, CUL4A or CUL4B and RBX1. DDB1 may recruit specific substrate targeting subunits to the DCX complex. These substrate targeting subunits are generally known as DCAF (DDB1- and CUL4-associated factor) or CDW (CUL4-DDB1-associated WD40-repeat) proteins. Interacts with AMBRA1, ATG16L1, BTRC, CRBN, DCAF1, DCAF4, DCAF5, DCAF6, DCAF7, DCAF8, DCAF9, DCAF10, DCAF11, DCAF12, DCAF15, DCAF16, DCAF17, DDA1, DET1, DTL, ERCC8, FBXW5, FBXW8, GRWD1, KATNB1, NLE1, NUP43, PAFAH1B1, PHIP, PWP1, RBBP4, RBBP5, RBBP7, COP1, SNRNP40, DCAF1, WDR5, WDR5B, WDR12, WDR26, WDR39, WDR42, WDR53, WDR59, WDR61, WSB1, WSB2, LRWD1 and WDTC1. DCX complexes may associate with the COP9 signalosome, and this inhibits the E3 ubiquitin-protein ligase activity of the complex. Interacts with NF2, TSC1 and TSC2. Interacts with AGO1 and AGO2. Associates with the E3 ligase complex containing DYRK2, EDD/UBR5, DDB1 and DCAF1 proteins (EDVP complex). Interacts directly with DYRK2. DCX(DTL) complex interacts with FBXO11; does not ubiquitinate and degradate FBXO11. Interacts with TRPC4AP. Interacts with CRY1 and CRY2. The DDB1-CUL4A complex interacts with CRY1. May also interact with DCUN1D1, DCUN1D2, DCUN1D3 and DCUN1D5. Component of the DCX(DCAF13) E3 ubiquitin ligase complex, at least composed of CUL4 (CUL4A or CUL4B), DDB1, DCAF13 and RBX1. Interacts with DCAF13 (via WD40 domain). Phosphorylated by ABL1. Post-translationally, ubiquitinated by CUL4A. Subsequently degraded by ubiquitin-dependent proteolysis. In terms of processing, acetylated, promoting interaction with CUL4 (CUL4A or CUL4B) and subsequent formation of DCX (DDB1-CUL4-X-box) E3 ubiquitin-protein ligase complexes. Deacetylation by SIRT7 impairs the interaction with CUL4 (CUL4A or CUL4B) and formation of DCX (DDB1-CUL4-X-box) E3 ubiquitin-protein ligase complexes.

The protein localises to the cytoplasm. It is found in the nucleus. It functions in the pathway protein modification; protein ubiquitination. Protein, which is both involved in DNA repair and protein ubiquitination, as part of the UV-DDB complex and DCX (DDB1-CUL4-X-box) complexes, respectively. Core component of the UV-DDB complex (UV-damaged DNA-binding protein complex), a complex that recognizes UV-induced DNA damage and recruit proteins of the nucleotide excision repair pathway (the NER pathway) to initiate DNA repair. The UV-DDB complex preferentially binds to cyclobutane pyrimidine dimers (CPD), 6-4 photoproducts (6-4 PP), apurinic sites and short mismatches. Also functions as a component of numerous distinct DCX (DDB1-CUL4-X-box) E3 ubiquitin-protein ligase complexes which mediate the ubiquitination and subsequent proteasomal degradation of target proteins. The functional specificity of the DCX E3 ubiquitin-protein ligase complex is determined by the variable substrate recognition component recruited by DDB1. DCX(DDB2) (also known as DDB1-CUL4-ROC1, CUL4-DDB-ROC1 and CUL4-DDB-RBX1) may ubiquitinate histone H2A, histone H3 and histone H4 at sites of UV-induced DNA damage. The ubiquitination of histones may facilitate their removal from the nucleosome and promote subsequent DNA repair. DCX(DDB2) also ubiquitinates XPC, which may enhance DNA-binding by XPC and promote NER. DCX(DTL) plays a role in PCNA-dependent polyubiquitination of CDT1 and MDM2-dependent ubiquitination of TP53 in response to radiation-induced DNA damage and during DNA replication. DCX(ERCC8) (the CSA complex) plays a role in transcription-coupled repair (TCR). The DDB1-CUL4A-DTL E3 ligase complex regulates the circadian clock function by mediating the ubiquitination and degradation of CRY1. DDB1-mediated CRY1 degradation promotes FOXO1 protein stability and FOXO1-mediated gluconeogenesis in the liver. By acting on TET dioxygenses, essential for oocyte maintenance at the primordial follicle stage, hence essential for female fertility. Maternal factor required for proper zygotic genome activation and genome reprogramming. The polypeptide is DNA damage-binding protein 1 (Ddb1) (Rattus norvegicus (Rat)).